A 247-amino-acid polypeptide reads, in one-letter code: MSKEPDRLFAQPLEQVPDFVFNEDVVQVFPDMIKRSVPGYPTIVENLGVLAARFAQPHSALYDLGASLGAVSQSLRRHVRSDGCRVIAVDNSAAMVERCRQYLTAQDSMFQELLPVQVLEADILTLPFEPASVVAMNFTLQFIAPEQRLALLGRIRQALLPGGALILSEKLRFADDQEQQLLNELHLDFKRANGYSELEIAQKRSAIENVMKPDTLETHKERLHAAGFSKVVPWFQCLNFASLIALP.

S-adenosyl-L-methionine-binding positions include Y40, 65-67 (GAS), 90-91 (DN), 122-123 (DI), N137, and R204.

This sequence belongs to the class I-like SAM-binding methyltransferase superfamily. Cx-SAM synthase family. In terms of assembly, homodimer.

It catalyses the reaction prephenate + S-adenosyl-L-methionine = carboxy-S-adenosyl-L-methionine + 3-phenylpyruvate + H2O. In terms of biological role, catalyzes the conversion of S-adenosyl-L-methionine (SAM) to carboxy-S-adenosyl-L-methionine (Cx-SAM). This chain is Carboxy-S-adenosyl-L-methionine synthase, found in Pseudomonas entomophila (strain L48).